Reading from the N-terminus, the 204-residue chain is Large ribosomal subunit protein eL15B (204 aa).

The tract at residues 165–185 (TATGKKSRGINKGHKFNNTKA) is disordered. Residues 169-185 (KKSRGINKGHKFNNTKA) are compositionally biased toward basic residues.

The protein belongs to the eukaryotic ribosomal protein eL15 family. As to quaternary structure, component of the large ribosomal subunit (LSU). Mature yeast ribosomes consist of a small (40S) and a large (60S) subunit. The 40S small subunit contains 1 molecule of ribosomal RNA (18S rRNA) and 33 different proteins (encoded by 57 genes). The large 60S subunit contains 3 rRNA molecules (25S, 5.8S and 5S rRNA) and 46 different proteins (encoded by 81 genes).

The protein resides in the cytoplasm. Component of the ribosome, a large ribonucleoprotein complex responsible for the synthesis of proteins in the cell. The small ribosomal subunit (SSU) binds messenger RNAs (mRNAs) and translates the encoded message by selecting cognate aminoacyl-transfer RNA (tRNA) molecules. The large subunit (LSU) contains the ribosomal catalytic site termed the peptidyl transferase center (PTC), which catalyzes the formation of peptide bonds, thereby polymerizing the amino acids delivered by tRNAs into a polypeptide chain. The nascent polypeptides leave the ribosome through a tunnel in the LSU and interact with protein factors that function in enzymatic processing, targeting, and the membrane insertion of nascent chains at the exit of the ribosomal tunnel. This Saccharomyces cerevisiae (strain ATCC 204508 / S288c) (Baker's yeast) protein is Large ribosomal subunit protein eL15B.